The sequence spans 285 residues: Mitochondrial substrate carrier family protein L (285 aa).

Residues 1–13 are Mitochondrial intermembrane-facing; sequence MIASKETKEKIRN. Solcar repeat units follow at residues 8-94, 103-185, and 193-282; these read KEKI…VKSK, ISLG…AQRY, and MTMG…VMKF. Residues 14–34 form a helical membrane-spanning segment; it reads FIGGFASGAASTLAGHPFDTL. Over 35–69 the chain is Mitochondrial matrix; it reads KVRLQTEGSTGRFRGLAHCFTTTIKEEGFFALYKG. Residues 70 to 90 traverse the membrane as a helical segment; the sequence is VTPPLLGMSIINSCMFGAMNI. The Mitochondrial intermembrane portion of the chain corresponds to 91-102; that stretch reads VKSKIHTDKSTP. Residues 103 to 123 form a helical membrane-spanning segment; sequence ISLGEIMVSGAITGWIVSFVA. Over 124 to 156 the chain is Mitochondrial matrix; it reads CPIETVKSKLQVQYTGVKLYNGPIDCIKKIGIR. The helical transmembrane segment at 157 to 177 threads the bilayer; the sequence is GLYKALIPTGFQRNSLYAYFG. Residues 178-198 are Mitochondrial intermembrane-facing; the sequence is CYELAQRYLRREDGSMTMGRS. The chain crosses the membrane as a helical span at residues 199 to 219; that stretch reads FIAGGIAGTGFWLTNFPFDVI. The Mitochondrial matrix portion of the chain corresponds to 220 to 256; it reads RSRIMTMPYNESPPRYKGMIDCAKHIYRVDGLKGFWK. Residues 257 to 277 form a helical membrane-spanning segment; sequence GFSPCLLRTFPANGATFVAYE. The Mitochondrial intermembrane portion of the chain corresponds to 278 to 285; it reads CVMKFFPM.

Belongs to the mitochondrial carrier (TC 2.A.29) family.

It localises to the mitochondrion inner membrane. Its function is as follows. Mitochondrial solute carriers shuttle metabolites, nucleotides, and cofactors through the mitochondrial inner membrane. This is Mitochondrial substrate carrier family protein L (mcfL) from Dictyostelium discoideum (Social amoeba).